The chain runs to 225 residues: Histone H3-like centromeric protein cid (225 aa).

Over residues Met1–Pro11 the composition is skewed to basic residues. Residues Met1–Lys131 form a disordered region. The segment covering Phe43–Asp52 has biased composition (polar residues). Phosphoserine occurs at positions 74 and 75. Thr76 carries the post-translational modification Phosphothreonine. Residue Ser77 is modified to Phosphoserine. The segment covering Arg86–Glu103 has biased composition (polar residues). The H3-like stretch occupies residues Met133–Phe225.

Belongs to the histone H3 family. As to quaternary structure, forms a nucleosome-like histone octamer containing two molecules each of H2A, H2B, cid and H4 assembled in one cid-H4 heterotetramer and two H2A-H2B heterodimers. The cid-H4 heterotetramer is more compact and structurally more rigid than corresponding H3-H4 heterotetramers. Interacts with the condensin subunit Cap-G. Interacts with Chrac-14.

The protein resides in the nucleus. It is found in the chromosome. It localises to the centromere. Its subcellular location is the kinetochore. Its function is as follows. Histone H3-like variant which exclusively replaces conventional H3 in the nucleosome core of centromeric chromatin at the inner plate of the kinetochore. Required for recruitment and assembly of kinetochore proteins, mitotic progression and chromosome segregation. May serve as an epigenetic mark that propagates centromere identity through replication and cell division. This chain is Histone H3-like centromeric protein cid, found in Drosophila melanogaster (Fruit fly).